Consider the following 687-residue polypeptide: Homoaconitase, mitochondrial (687 aa).

The N-terminal 18 residues, M1–Y18, are a transit peptide targeting the mitochondrion. Positions 340, 400, and 403 each coordinate [4Fe-4S] cluster. Residues E481–E490 show a composition bias toward acidic residues. Residues E481–L500 are disordered.

Belongs to the aconitase/IPM isomerase family. [4Fe-4S] cluster serves as cofactor.

It is found in the mitochondrion. The catalysed reaction is (2R,3S)-homoisocitrate = cis-homoaconitate + H2O. Its pathway is amino-acid biosynthesis; L-lysine biosynthesis via AAA pathway; L-alpha-aminoadipate from 2-oxoglutarate: step 3/5. Functionally, catalyzes the reversible hydration of cis-homoaconitate to (2R,3S)-homoisocitrate, a step in the alpha-aminoadipate pathway for lysine biosynthesis. This chain is Homoaconitase, mitochondrial (LYS4), found in Yarrowia lipolytica (strain CLIB 122 / E 150) (Yeast).